Reading from the N-terminus, the 458-residue chain is UDP-N-acetylmuramate--L-alanine ligase (458 aa).

112–118 (GMHGKTT) lines the ATP pocket.

This sequence belongs to the MurCDEF family.

Its subcellular location is the cytoplasm. The enzyme catalyses UDP-N-acetyl-alpha-D-muramate + L-alanine + ATP = UDP-N-acetyl-alpha-D-muramoyl-L-alanine + ADP + phosphate + H(+). It functions in the pathway cell wall biogenesis; peptidoglycan biosynthesis. Its function is as follows. Cell wall formation. This is UDP-N-acetylmuramate--L-alanine ligase from Acidobacterium capsulatum (strain ATCC 51196 / DSM 11244 / BCRC 80197 / JCM 7670 / NBRC 15755 / NCIMB 13165 / 161).